The following is a 356-amino-acid chain: Heparan sulfate 2-O-sulfotransferase 1 (356 aa).

Residues 1–11 are Cytoplasmic-facing; sequence MGLLRIMMPPK. Residues 12 to 28 form a helical; Signal-anchor for type II membrane protein membrane-spanning segment; sequence LQLLAVVAFAVAMLFLE. Positions 24-51 form a coiled coil; the sequence is MLFLENQIQKLEESRAKLERAIARHEVR. Residues 29 to 356 are Lumenal-facing; that stretch reads NQIQKLEESR…FYEKIYPKSN (328 aa). Positions 83, 84, 85, 86, 87, and 88 each coordinate adenosine 3',5'-bisphosphate. N-linked (GlcNAc...) asparagine glycans are attached at residues Asn-108 and Asn-127. Active-site residues include His-140 and His-142. Residues Arg-164 and Ser-172 each coordinate adenosine 3',5'-bisphosphate. Intrachain disulfides connect Cys-201–Cys-209 and Cys-222–Cys-228. Residues Tyr-279, Ser-285, Thr-290, and Lys-293 each contribute to the adenosine 3',5'-bisphosphate site.

This sequence belongs to the sulfotransferase 3 family. As to quaternary structure, homotrimer. Interacts with the C5-epimerase GLCE. Post-translationally, N-glycosylated. In terms of tissue distribution, widely expressed. Expressed at higher level in lung and brain. Weakly expressed in spleen.

Its subcellular location is the golgi apparatus membrane. Catalyzes the transfer of a sulfo group from 3'-phospho-5'-adenylyl sulfate (PAPS) to the 2-OH position of iduronic acid (IdoA) or glucuronic acid (GlcA) within the heparan sulfate (HS) chain and participates in HS biosynthesis. Required for metanephric development of kidney formation, suggesting that 2-O-sulfation within HS is essential for signaling between ureteric bud and metanephric mesenchyme. This is Heparan sulfate 2-O-sulfotransferase 1 from Mus musculus (Mouse).